The following is a 546-amino-acid chain: Zinc finger and BTB domain-containing protein 7A (546 aa).

The BTB domain occupies 34-101 (CDVVILVEGQ…AYTATLTVST (68 aa)). Residues 189–288 (QEDEEEPDCN…SFVPTGAEAE (100 aa)) form a disordered region. 3 consecutive C2H2-type zinc fingers follow at residues 359–381 (QKCP…IRTH), 387–409 (YECN…MRKH), and 415–437 (YLCQ…MRVH). A C2H2-type 4; atypical zinc finger spans residues 443 to 467 (YQCDSCFKTFVRSDHLHRHLKKDGC). Residues 463–546 (KKDGCNGIPS…AAEGSAPGPS (84 aa)) are disordered. A compositionally biased stretch (low complexity) spans 534-546 (AGGAAEGSAPGPS).

It localises to the nucleus. Transcription factor that represses the transcription of a wide range of genes involved in cell proliferation and differentiation. Directly and specifically binds to the consensus sequence 5'-[GA][CA]GACCCCCCCCC-3' and represses transcription both by regulating the organization of chromatin and through the direct recruitment of transcription factors to gene regulatory regions. May also play a role, independently of its transcriptional activity, in double-strand break repair via classical non-homologous end joining/cNHEJ and in alternative splicing. This Gallus gallus (Chicken) protein is Zinc finger and BTB domain-containing protein 7A.